The sequence spans 189 residues: Pyridoxal 5'-phosphate synthase subunit PdxT (189 aa).

47–49 (GES) serves as a coordination point for L-glutamine. Cys79 acts as the Nucleophile in catalysis. Residues Arg106 and 135–136 (IR) contribute to the L-glutamine site. Catalysis depends on charge relay system residues His171 and Glu173.

This sequence belongs to the glutaminase PdxT/SNO family. As to quaternary structure, in the presence of PdxS, forms a dodecamer of heterodimers. Only shows activity in the heterodimer.

The catalysed reaction is aldehydo-D-ribose 5-phosphate + D-glyceraldehyde 3-phosphate + L-glutamine = pyridoxal 5'-phosphate + L-glutamate + phosphate + 3 H2O + H(+). It carries out the reaction L-glutamine + H2O = L-glutamate + NH4(+). It functions in the pathway cofactor biosynthesis; pyridoxal 5'-phosphate biosynthesis. Catalyzes the hydrolysis of glutamine to glutamate and ammonia as part of the biosynthesis of pyridoxal 5'-phosphate. The resulting ammonia molecule is channeled to the active site of PdxS. This chain is Pyridoxal 5'-phosphate synthase subunit PdxT, found in Desulforudis audaxviator (strain MP104C).